A 207-amino-acid chain; its full sequence is Octanoyltransferase (207 aa).

In terms of domain architecture, BPL/LPL catalytic spans 29-204; it reads AETRDELWVV…HLERHLSTSK (176 aa). Residues 68-75, 135-137, and 148-150 each bind substrate; these read RGGQITYH, SLG, and GLS. The active-site Acyl-thioester intermediate is C166.

The protein belongs to the LipB family.

The protein resides in the cytoplasm. It carries out the reaction octanoyl-[ACP] + L-lysyl-[protein] = N(6)-octanoyl-L-lysyl-[protein] + holo-[ACP] + H(+). It functions in the pathway protein modification; protein lipoylation via endogenous pathway; protein N(6)-(lipoyl)lysine from octanoyl-[acyl-carrier-protein]: step 1/2. Catalyzes the transfer of endogenously produced octanoic acid from octanoyl-acyl-carrier-protein onto the lipoyl domains of lipoate-dependent enzymes. Lipoyl-ACP can also act as a substrate although octanoyl-ACP is likely to be the physiological substrate. This Chromobacterium violaceum (strain ATCC 12472 / DSM 30191 / JCM 1249 / CCUG 213 / NBRC 12614 / NCIMB 9131 / NCTC 9757 / MK) protein is Octanoyltransferase.